Here is a 589-residue protein sequence, read N- to C-terminus: Protein kinase G11A (589 aa).

The interval 1 to 167 (MASKAMPRAP…SACSSISSVT (167 aa)) is disordered. Polar residues-rich tracts occupy residues 15–36 (NLQSLKLCSQNDSSLETTSPSK) and 63–76 (TQHQNESIDLTGSN). Residues 91 to 100 (RLADEEKGVV) show a composition bias toward basic and acidic residues. Low complexity predominate over residues 142-165 (SSSRCRPSTSSDVSDESACSSISS). The Protein kinase domain maps to 195 to 533 (FKLLKKLGCG…ATEIKQHPFF (339 aa)). Residues 201-209 (LGCGDIGSV) and Lys224 contribute to the ATP site. Asp320 acts as the Proton acceptor in catalysis. The interval 551–589 (RPVEIERPPKQPVSTSEPAAAPSDAAQKSSDSYLEFDFF) is disordered.

The protein belongs to the protein kinase superfamily. Ser/Thr protein kinase family.

The catalysed reaction is L-seryl-[protein] + ATP = O-phospho-L-seryl-[protein] + ADP + H(+). The enzyme catalyses L-threonyl-[protein] + ATP = O-phospho-L-threonyl-[protein] + ADP + H(+). May play a role in the regulation of metabolism and signal transduction processes. In Oryza sativa subsp. japonica (Rice), this protein is Protein kinase G11A.